We begin with the raw amino-acid sequence, 118 residues long: Small ribosomal subunit protein uS13 (118 aa).

The interval 94–118 is disordered; that stretch reads GLPVRGQRTRTNARTRKGPRKAIKK.

This sequence belongs to the universal ribosomal protein uS13 family. As to quaternary structure, part of the 30S ribosomal subunit. Forms a loose heterodimer with protein S19. Forms two bridges to the 50S subunit in the 70S ribosome.

In terms of biological role, located at the top of the head of the 30S subunit, it contacts several helices of the 16S rRNA. In the 70S ribosome it contacts the 23S rRNA (bridge B1a) and protein L5 of the 50S subunit (bridge B1b), connecting the 2 subunits; these bridges are implicated in subunit movement. Contacts the tRNAs in the A and P-sites. In Thiobacillus denitrificans (strain ATCC 25259 / T1), this protein is Small ribosomal subunit protein uS13.